The sequence spans 1256 residues: Putative protein DDB_G0292252 (1256 aa).

Disordered regions lie at residues 1-53 (MSDD…NNNN), 145-243 (LLNG…SISR), 898-951 (EQQQ…PVET), and 1069-1136 (SHPT…ATIS). Positions 147-214 (NGNNSNNNSN…NGNNINTSNG (68 aa)) are enriched in low complexity. Polar residues predominate over residues 222–243 (QTESTEQDFTSTSQNSTPSISR). 2 stretches are compositionally biased toward low complexity: residues 898 to 916 (EQQQ…SNNE) and 925 to 942 (TTAA…TTTT). Over residues 1069–1079 (SHPTIQSTSSP) the composition is skewed to polar residues. Residues 1080 to 1136 (STSSSNNNNSTTTATNNNGNNGNNNNGNGNNNNNNNNNNNNNNNNNNNNNNGPATIS) are compositionally biased toward low complexity.

The sequence is that of Putative protein DDB_G0292252 from Dictyostelium discoideum (Social amoeba).